We begin with the raw amino-acid sequence, 239 residues long: Large ribosomal subunit protein uL2 (239 aa).

The disordered stretch occupies residues 205 to 224 (GGHQHCGRPKTVARGTSPGR).

The protein belongs to the universal ribosomal protein uL2 family. As to quaternary structure, part of the 50S ribosomal subunit. Forms a bridge to the 30S subunit in the 70S ribosome.

Its function is as follows. One of the primary rRNA binding proteins. Required for association of the 30S and 50S subunits to form the 70S ribosome, for tRNA binding and peptide bond formation. It has been suggested to have peptidyltransferase activity; this is somewhat controversial. Makes several contacts with the 16S rRNA in the 70S ribosome. The polypeptide is Large ribosomal subunit protein uL2 (Methanoculleus marisnigri (strain ATCC 35101 / DSM 1498 / JR1)).